We begin with the raw amino-acid sequence, 747 residues long: Myotubularin-related protein 12 (747 aa).

The region spanning Phe-205–Tyr-643 is the Myotubularin phosphatase domain. Residues Val-449–Lys-558 form an interaction with MTM1 region. Phosphoserine occurs at positions 564, 601, and 716.

It belongs to the protein-tyrosine phosphatase family. Non-receptor class myotubularin subfamily. As to quaternary structure, heterodimer with lipid phosphatase MTM1. Heterodimer with lipid phosphatase MTMR2. In terms of tissue distribution, expressed in skeletal muscles (at protein level). Ubiquitous with prominent expression in brain, heart, kidney, placenta, and lung.

The protein resides in the cytoplasm. Its subcellular location is the sarcoplasmic reticulum. It is found in the myofibril. It localises to the sarcomere. Acts as an adapter for the myotubularin-related phosphatases. Regulates phosphatase MTM1 protein stability and possibly its intracellular location. By stabilizing MTM1 protein levels, required for skeletal muscle maintenance but not for myogenesis. This Homo sapiens (Human) protein is Myotubularin-related protein 12 (MTMR12).